A 215-amino-acid chain; its full sequence is MOB kinase activator-like 1B (215 aa).

Residues 1–25 (MSLFGLGRNQKTFRPKKSAPSGTKG) form a disordered region. Positions 79, 84, 161, and 166 each coordinate Zn(2+).

It belongs to the MOB1/phocein family. Interacts with SIK1. Expression is detected along the vasculature in cotyledons, hypocotyls and roots of 3- to 4-day-old seedlings.

In Arabidopsis thaliana (Mouse-ear cress), this protein is MOB kinase activator-like 1B.